The chain runs to 316 residues: uncharacterized protein (316 aa).

Positions 1–34 are disordered; sequence MATKRKIGDGYSSSDDNQPKRERSEGGEDQQLVP. The segment covering 17 to 26 has biased composition (basic and acidic residues); sequence NQPKRERSEG.

This is an uncharacterized protein from Lepidoptera (butterflies and moths).